We begin with the raw amino-acid sequence, 137 residues long: Small ribosomal subunit protein uS12 (137 aa).

Residues 1–55 (MPTINQLVRKPRQSKSKKSDSPALNRNFNSKKKKFTDLNSPQKRGVCTRVGTMTP) form a disordered region. Position 102 is a 3-methylthioaspartic acid (D102). The segment at 118–137 (SGVDGRRQGRSLYGTKKPKK) is disordered.

The protein belongs to the universal ribosomal protein uS12 family. In terms of assembly, part of the 30S ribosomal subunit. Contacts proteins S8 and S17. May interact with IF1 in the 30S initiation complex.

With S4 and S5 plays an important role in translational accuracy. In terms of biological role, interacts with and stabilizes bases of the 16S rRNA that are involved in tRNA selection in the A site and with the mRNA backbone. Located at the interface of the 30S and 50S subunits, it traverses the body of the 30S subunit contacting proteins on the other side and probably holding the rRNA structure together. The combined cluster of proteins S8, S12 and S17 appears to hold together the shoulder and platform of the 30S subunit. The protein is Small ribosomal subunit protein uS12 of Staphylococcus saprophyticus subsp. saprophyticus (strain ATCC 15305 / DSM 20229 / NCIMB 8711 / NCTC 7292 / S-41).